The chain runs to 368 residues: Biglycan (368 aa).

The N-terminal stretch at 1-16 is a signal peptide; that stretch reads MWPLWRLVSLLALSQA. Residues 17-37 constitute a propeptide that is removed on maturation; sequence LPFEQRGFWDFTLDDGPFMMN. Ser-42 and Ser-47 each carry an O-linked (Xyl...) (glycosaminoglycan) serine glycan. 2 cysteine pairs are disulfide-bonded: Cys-63–Cys-69 and Cys-67–Cys-76. LRR repeat units follow at residues 82-102, 103-126, 127-150, 151-171, 172-195, 196-220, 221-241, 242-265, 266-289, 290-312, 313-342, and 343-368; these read KSVP…NNDI, SELR…NNKI, SKIH…KNHL, VEIP…DNRI, RKVP…GNPL, ENSG…EAKL, TGIP…HNKI, QAIE…HNQI, RMIE…NNKL, ARVP…SNNI, TKVG…NNPV, and PYWE…NYKK. O-linked (Xyl...) (glycosaminoglycan) serine glycans are attached at residues Ser-180 and Ser-198. Asn-270 and Asn-311 each carry an N-linked (GlcNAc...) asparagine glycan. A disulfide bond links Cys-321 and Cys-354.

Belongs to the small leucine-rich proteoglycan (SLRP) family. SLRP class I subfamily. Homodimer. Forms a ternary complex with MFAP2 and ELN. Post-translationally, the two attached glycosaminoglycan chains can be either chondroitin sulfate or dermatan sulfate. As to expression, detected in placenta (at protein level). Found in several connective tissues, especially in articular cartilages.

The protein resides in the secreted. Its subcellular location is the extracellular space. It is found in the extracellular matrix. In terms of biological role, may be involved in collagen fiber assembly. The sequence is that of Biglycan (BGN) from Homo sapiens (Human).